A 179-amino-acid polypeptide reads, in one-letter code: Acireductone dioxygenase (179 aa).

Fe(2+) is bound by residues His85, His87, Glu91, and His132. The Ni(2+) site is built by His85, His87, Glu91, and His132.

The protein belongs to the acireductone dioxygenase (ARD) family. Requires Fe(2+) as cofactor. It depends on Ni(2+) as a cofactor.

Its subcellular location is the cytoplasm. The protein resides in the nucleus. It catalyses the reaction 1,2-dihydroxy-5-(methylsulfanyl)pent-1-en-3-one + O2 = 4-methylsulfanyl-2-oxobutanoate + formate + 2 H(+). The enzyme catalyses 1,2-dihydroxy-5-(methylsulfanyl)pent-1-en-3-one + O2 = 3-(methylsulfanyl)propanoate + CO + formate + 2 H(+). It functions in the pathway amino-acid biosynthesis; L-methionine biosynthesis via salvage pathway; L-methionine from S-methyl-5-thio-alpha-D-ribose 1-phosphate: step 5/6. Catalyzes 2 different reactions between oxygen and the acireductone 1,2-dihydroxy-3-keto-5-methylthiopentene (DHK-MTPene) depending upon the metal bound in the active site. Fe-containing acireductone dioxygenase (Fe-ARD) produces formate and 2-keto-4-methylthiobutyrate (KMTB), the alpha-ketoacid precursor of methionine in the methionine recycle pathway. Ni-containing acireductone dioxygenase (Ni-ARD) produces methylthiopropionate, carbon monoxide and formate, and does not lie on the methionine recycle pathway. The chain is Acireductone dioxygenase from Saccharomyces cerevisiae (strain ATCC 204508 / S288c) (Baker's yeast).